A 432-amino-acid polypeptide reads, in one-letter code: Glycerophosphocholine acyltransferase 1 (432 aa).

The Cytoplasmic segment spans residues 1 to 110 (MYKLDNNDID…DSIFFKNSSR (110 aa)). Serine 78 bears the Phosphoserine mark. The helical transmembrane segment at 111–131 (LEKAFYPFTLFNIFFIGFLMG) threads the bilayer. A topological domain (lumenal) is located at residue arginine 132. A helical transmembrane segment spans residues 133–153 (FPEWFHVYYTILFFVLMPIRF). Over 154-162 (YTYYKTKNH) the chain is Cytoplasmic. A helical membrane pass occupies residues 163 to 183 (YFLADFCYFVNMLCLLFIWIF). At 184–187 (PYSY) the chain is on the lumenal side. A helical membrane pass occupies residues 188–208 (SLFQSCFAFTFGTLCFAVITW). Topologically, residues 209 to 221 (RNSLVIHSIDKTT) are cytoplasmic. A helical transmembrane segment spans residues 222 to 242 (SCFIHIIPPCVMYVIYHGLPL). Over 243-263 (EYKIERFPGAIIQSELDIKKN) the chain is Lumenal. Residues 264-284 (ILWTSLYYLVWQSLYHYFITL) form a helical membrane-spanning segment. Over 285–318 (KKSSKIKSGERMTSFEYLTTHQFKNFWAVKLRSP) the chain is Cytoplasmic. A helical membrane pass occupies residues 319–339 (WPMIIYTLSQYFYQLFTMLLC). Topologically, residues 340–346 (GIWIRYK) are lumenal. A helical membrane pass occupies residues 347–369 (LAAALFLTIVFLWASHNGATYYI). The Cytoplasmic portion of the chain corresponds to 370–432 (DHYGKNFEKE…DSSSVSSKSD (63 aa)). Residues 413 to 432 (LNVNRDEDFDDSSSVSSKSD) are disordered.

The protein belongs to the GPC1 family.

Its subcellular location is the membrane. It carries out the reaction sn-glycerol 3-phosphocholine + an acyl-CoA = a 1-acyl-sn-glycero-3-phosphocholine + CoA. The catalysed reaction is sn-glycero-3-phosphoethanolamine + an acyl-CoA = a monoacyl-sn-glycero-3-phosphoethanolamine + CoA. The enzyme catalyses sn-glycero-3-phosphoethanolamine + (9Z)-octadecenoyl-CoA = (9Z-octadecenoyl)-sn-glycero-3-phosphoethanolamine + CoA. It catalyses the reaction sn-glycerol 3-phosphocholine + hexadecanoyl-CoA = hexadecanoyl-sn-glycero-3-phosphocholine + CoA. It carries out the reaction (9Z,12Z)-octadecadienoyl-CoA + sn-glycerol 3-phosphocholine = (9Z,12Z-octadecadienoyl)-sn-glycero-3-phosphocholine + CoA. The catalysed reaction is (12R)-hydroxy-(9Z)-octadecenoyl-CoA + sn-glycerol 3-phosphocholine = (12R-hydroxy-9Z-octadecenoyl)-sn-glycero-3-phosphocholine + CoA. The enzyme catalyses (9Z,12Z,15Z)-octadecatrienoyl-CoA + sn-glycerol 3-phosphocholine = (9Z,12Z,15Z-octadecatrienoyl)-sn-glycero-3-phosphocholine + CoA. It catalyses the reaction sn-glycerol 3-phosphocholine + (9Z)-octadecenoyl-CoA = (9Z-octadecenoyl)-sn-glycero-3-phosphocholine + CoA. It carries out the reaction 1-(9Z-octadecenoyl)-sn-glycero-3-phosphoethanolamine + sn-glycerol 3-phosphocholine = (9Z-octadecenoyl)-sn-glycero-3-phosphocholine + sn-glycero-3-phosphoethanolamine. Its activity is regulated as follows. The GPCAT activity is sensitive to N-ethylmaleimide, phenanthroline, and divalent cations including Ca(2+), Mg(2+), Mn(2+) and Zn(2+). The activity is also inhibited by glycerol-3-phosphate (G3P). Its function is as follows. Glycerophosphocholine acyltransferase (GPCAT) that utilizes acyl-CoA to acylate glycero-3-phosphocholine (GPC), forming lysophosphatidylcholine (LPC). Shows broad acyl specificities with a preference for 16:0-CoA, polyunsaturated acyl-CoA, and the hydroxylated ricinoleoyl-CoA. Also catalyzes the acylation of glycero-3-phosphoethanolamine (GPE) with acyl-CoA. In addition to acyl-CoA, GPCAT efficiently utilizes LPC and lysophosphatidylethanolamine (LPE) as acyl donors in the acylation of GPC. Contributes to the maintenance of phosphatidylcholine (PC) homeostasis and might also have specific functions in acyl editing of PC, such as transferring acyl groups modified at the sn-2 position of PC to the sn-1. Involved in postsynthetic PC remodeling that produces more saturated PC species. This Saccharomyces cerevisiae (strain ATCC 204508 / S288c) (Baker's yeast) protein is Glycerophosphocholine acyltransferase 1.